The primary structure comprises 159 residues: uncharacterized protein (159 aa).

The N-acetyltransferase domain maps to 7 to 151 (LLINYKTLEE…NPLIWEPAHI (145 aa)).

This is an uncharacterized protein from Bacillus pumilus (strain SAFR-032).